Consider the following 925-residue polypeptide: Eukaryotic translation initiation factor 3 subunit A (925 aa).

Positions 108-127 are disordered; the sequence is QAQTDAKEESNKDQAEEDLE. Positions 112 to 121 are enriched in basic and acidic residues; it reads DAKEESNKDQ. One can recognise a PCI domain in the interval 324–498; the sequence is FKFYSSQFVL…DTVSFAQDPF (175 aa). Disordered stretches follow at residues 509 to 544 and 839 to 925; these read PESSTSDEAKNSESEEETSQETHADEEQNEQVFTRN and KEAL…AGRG. Coiled-coil stretches lie at residues 534-666 and 785-885; these read EEQN…MKKL and SVIA…SSRS. The span at 839–880 shows a compositional bias: basic and acidic residues; that stretch reads KEALAKEEELAKRRAERERINKERDEIARKQREIEELLEKKN. Positions 916–925 are enriched in basic residues; sequence RLKRMNAGRG.

This sequence belongs to the eIF-3 subunit A family. In terms of assembly, component of the eukaryotic translation initiation factor 3 (eIF-3) complex.

It localises to the cytoplasm. In terms of biological role, RNA-binding component of the eukaryotic translation initiation factor 3 (eIF-3) complex, which is involved in protein synthesis of a specialized repertoire of mRNAs and, together with other initiation factors, stimulates binding of mRNA and methionyl-tRNAi to the 40S ribosome. The eIF-3 complex specifically targets and initiates translation of a subset of mRNAs involved in cell proliferation. The polypeptide is Eukaryotic translation initiation factor 3 subunit A (Kluyveromyces lactis (strain ATCC 8585 / CBS 2359 / DSM 70799 / NBRC 1267 / NRRL Y-1140 / WM37) (Yeast)).